The chain runs to 289 residues: Mas-related G-protein coupled receptor member G (289 aa).

Topologically, residues 1-13 are extracellular; it reads MLSIFNIWGTFNR. A helical transmembrane segment spans residues 14–34; that stretch reads VLFFLSLTVSLAGLAGNTLLL. At 35 to 49 the chain is on the cytoplasmic side; the sequence is WHLGLRIKKGPFNTY. The chain crosses the membrane as a helical span at residues 50–70; that stretch reads LLHLAAADFLFLSCQVGFSIA. Topologically, residues 71-80 are extracellular; the sequence is KIASGYEDTL. Residues 81–101 traverse the membrane as a helical segment; the sequence is YFPVTFLWFAVGLWLLAAFIV. Residues 102 to 123 are Cytoplasmic-facing; sequence DCCLSYMFPSFCGPNCRPRYTS. Residues 124 to 144 traverse the membrane as a helical segment; the sequence is FVLCLVIWALTMLAVLLPANA. Over 145-164 the chain is Extracellular; it reads CGLLYNRMSLLVCLKYHWVS. The chain crosses the membrane as a helical span at residues 165 to 185; the sequence is VVWLGVLASTACGASMFLLVF. Residues 186-200 are Cytoplasmic-facing; the sequence is GNCCSSQPPSKFCKL. A helical membrane pass occupies residues 201–221; the sequence is AQCSGILLFFCRLPLVFYWCL. A topological domain (extracellular) is located at residue arginine 222. The chain crosses the membrane as a helical span at residues 223 to 243; it reads PVIKFLLPFFFPLATLLACID. The Cytoplasmic segment spans residues 244–289; sequence SSAKPLLYYLKGRQLRKEPLQVALNRALGEESQSSSGGISLPMSRV.

This sequence belongs to the G-protein coupled receptor 1 family. Mas subfamily.

It localises to the cell membrane. In terms of biological role, orphan receptor. May regulate nociceptor function and/or development, including the sensation or modulation of pain. The sequence is that of Mas-related G-protein coupled receptor member G (Mrgprg) from Rattus norvegicus (Rat).